Here is a 412-residue protein sequence, read N- to C-terminus: Burnettramic acids biosynthesis cluster protein E (412 aa).

3 disordered regions span residues Met1 to Arg66, Arg308 to Thr342, and Ser386 to Gly412. The segment covering Glu36 to Glu58 has biased composition (acidic residues). Positions Glu395 to Ser404 are enriched in polar residues.

It functions in the pathway mycotoxin biosynthesis. Its function is as follows. Part of the gene cluster that mediates the biosynthesis of burnettramic acids, an unusual class of bolaamphiphilic pyrrolizidinediones that display potent antibacterial, antifungal, and cytotoxic activities. The first step of the biosynthesis of burnettramic acids is the hydroxylation of proline by the proline hydroxylase buaE to generate 4-hydroxyproline. The PKS-NRPS buaA and trans-enoyl reductase buaC construct the highly reduced polyketide chain, and the condensation (C) domain of buaA then catalyzes the amide bond formation with the activated 4-hydroxyproline. This is followed by the R domain releasing the nascent polyketide-peptide directly via a Dieckmann condensation to afford a tetramic acid fused to the hydroxyproline, generating the bicyclic pyrrolidinedione moiety. The cytochrome P450 monooxygenases buaD and buaG are likely responsible for the multiple hydroxylations on the polyketide chain and its terminus, although in the heterologous context, buaD does not appear to be required. Therefore, while buaG may be a multifunctional cytochrome P450 monooxygenase, it cannot be ruled out that the two secondary alcohols on the polyketide chain could have an acetate origin. Finally, the glycosyltransferase buaB transfers beta-D-mannose to the aglycone burnettramic acid A to form burnettramic acid A. Burnettramic acid B is a minor cis-pyrrolizidine epimer of burnettramic acid A and it is likely that small amounts of it form naturally in acidic environments. The role of the uncharacterized protein buaF in the biosynthesis of burnettramic acids has still to be determined. The polypeptide is Burnettramic acids biosynthesis cluster protein E (Petromyces alliaceus (Aspergillus alliaceus)).